Consider the following 600-residue polypeptide: E3 ubiquitin-protein ligase RLIM (600 aa).

Met-1 is subject to N-acetylmethionine. Positions 1 to 11 (MENSDSNDKGS) are enriched in basic and acidic residues. 3 disordered regions span residues 1-24 (MENS…QMDR), 49-355 (NNLL…ERGG), and 417-497 (SDSE…VTFD). Polar residues-rich tracts occupy residues 103-131 (SVRQ…NPNS) and 140-152 (INVN…QTSE). Phosphoserine is present on Ser-163. The span at 166–175 (NMESSSQRQM) shows a compositional bias: polar residues. Over residues 176–187 (ENSASESASARP) the composition is skewed to low complexity. Phosphoserine occurs at positions 194, 227, and 229. Residues 213 to 228 (RSPEHRRTRARAERSR) are compositionally biased toward basic and acidic residues. Residues 244–255 (LEQSSENEPEGS) show a composition bias toward polar residues. A Phosphoserine modification is found at Ser-269. The span at 288 to 306 (SQGTSSSDTGSNSESSGSG) shows a compositional bias: low complexity. Over residues 322-332 (RPGEYRQRDSI) the composition is skewed to basic and acidic residues. Residues 333–349 (ASRTRSRSQAPNNTVTY) are compositionally biased toward polar residues. A compositionally biased stretch (low complexity) spans 448-475 (SGSSSSSSPSPSSSGESSESSSEMFEGS). Residues 546-587 (CSVCITEYTEGNKLRKLPCSHEYHVHCIDRWLSENSTCPICR) form an RING-type zinc finger. Positions 597–600 (ESVV) match the PDZ-binding motif.

It belongs to the RNF12 family. In terms of assembly, interacts (via N-terminus) with TERF1. Interacts (via C-terminus) with ESR1. Interacts with LIM/homeobox factors such as LHX3. Interacts with LDB1, LDB2 and SIN3A. Interacts with LIMK1.

It localises to the nucleus. The enzyme catalyses S-ubiquitinyl-[E2 ubiquitin-conjugating enzyme]-L-cysteine + [acceptor protein]-L-lysine = [E2 ubiquitin-conjugating enzyme]-L-cysteine + N(6)-ubiquitinyl-[acceptor protein]-L-lysine.. It functions in the pathway protein modification; protein ubiquitination. Functionally, E3 ubiquitin-protein ligase that acts as a negative coregulator for LIM homeodomain transcription factors by mediating the ubiquitination and subsequent degradation of LIM cofactors LDB1 and LDB2 and by mediating the recruitment the SIN3a/histone deacetylase corepressor complex. Ubiquitination and degradation of LIM cofactors LDB1 and LDB2 allows DNA-bound LIM homeodomain transcription factors to interact with other protein partners such as RLIM. Plays a role in telomere length-mediated growth suppression by mediating the ubiquitination and degradation of TERF1. By targeting ZFP42 for degradation, acts as an activator of random inactivation of X chromosome in the embryo, a stochastic process in which one X chromosome is inactivated to minimize sex-related dosage differences of X-encoded genes in somatic cells of female placental mammals. This is E3 ubiquitin-protein ligase RLIM (Rlim) from Mus musculus (Mouse).